The chain runs to 384 residues: Probable splicing factor YJU2B (384 aa).

The interval 1–28 is disordered; the sequence is MGERKGTNKYYPPDFDPAKHGSLNGYRN. A coiled-coil region spans residues 183–212; that stretch reads NSLLRSKFREEKKQIKEEEERDQALLTKAS. A disordered region spans residues 275–331; sequence GIRTKTPSVPGISPVSLGVVRRTSKEENKAEDKSVESPDGSRSRKAEGMCRKEETGC. The segment covering 297-331 has biased composition (basic and acidic residues); it reads TSKEENKAEDKSVESPDGSRSRKAEGMCRKEETGC.

This sequence belongs to the CWC16 family.

It is found in the nucleus. Functionally, may be involved in mRNA splicing. The chain is Probable splicing factor YJU2B (yju2b) from Xenopus laevis (African clawed frog).